Reading from the N-terminus, the 525-residue chain is Tigger transposable element-derived protein 2 (525 aa).

The region spanning 1–52 (MLGKRKRVVLTIKDKLDIIKKLEEGNSFKKLSVLYGIGESTVRDIKKNKERI) is the HTH psq-type domain. 2 consecutive DNA-binding regions (H-T-H motif) follow at residues 28–48 (FKKL…IKKN) and 100–132 (TICA…FKQR). The HTH CENPB-type domain occupies 67–139 (KRKSMKSSTY…KQRHGIPKAA (73 aa)). One can recognise a DDE-1 domain in the interval 168 to 385 (LLPEQIYGAD…IRSNTITRAW (218 aa)).

It belongs to the tigger transposable element derived protein family.

Its subcellular location is the nucleus. The sequence is that of Tigger transposable element-derived protein 2 (Tigd2) from Mus musculus (Mouse).